The following is a 244-amino-acid chain: Lymphotoxin-beta (244 aa).

At 1–18 (MGALGLEGRGGRLQGRGS) the chain is on the cytoplasmic side. The chain crosses the membrane as a helical; Signal-anchor for type II membrane protein span at residues 19–48 (LLLAVAGATSLVTLLLAVPITVLAVLALVP). Residues 49–244 (QDQGGLVTET…KTFFGAVMVG (196 aa)) are Extracellular-facing. The THD domain maps to 88 to 243 (PAAHLIGAPL…GKTFFGAVMV (156 aa)). N-linked (GlcNAc...) asparagine glycosylation is present at Asn222.

Belongs to the tumor necrosis factor family. Heterotrimer of either two LTB and one LTA subunits or (less prevalent) two LTA and one LTB subunits.

The protein resides in the membrane. Its function is as follows. Cytokine that binds to LTBR/TNFRSF3. May play a specific role in immune response regulation. Provides the membrane anchor for the attachment of the heterotrimeric complex to the cell surface. The protein is Lymphotoxin-beta (LTB) of Pan troglodytes (Chimpanzee).